The sequence spans 535 residues: Dimethylaniline monooxygenase [N-oxide-forming] 2 (535 aa).

Position 2 is an N-acetylalanine (A2). Residues 9 to 13 (GAGVS), E32, 40 to 41 (LW), and 61 to 62 (NT) contribute to the FAD site. Residues 60-61 (TN) and 195-198 (SAAD) contribute to the NADP(+) site. A Glycyl lysine isopeptide (Lys-Gly) (interchain with G-Cter in SUMO) cross-link involves residue K492. The chain crosses the membrane as a helical span at residues 510-530 (APVSFLLKILGLLAVVLAFFF).

It belongs to the FMO family. Requires FAD as cofactor. The cofactor is Mg(2+).

Its subcellular location is the microsome membrane. It localises to the endoplasmic reticulum membrane. Its function is as follows. Catalyzes the oxidative metabolism of numerous xenobiotics, including mainly therapeutic drugs and insecticides that contain a soft nucleophile, most commonly nitrogen and sulfur and participates to their bioactivation. Catalyzes the S-oxygenation of the prodrug ethionamide (ETA) to the S-oxide (ETASO), the first step in its bioactivation following by the second oxygenation to the sulfinic acid but to a lesser extend. This is Dimethylaniline monooxygenase [N-oxide-forming] 2 from Mus musculus (Mouse).